Consider the following 538-residue polypeptide: Chaperonin GroEL (538 aa).

ATP contacts are provided by residues T29 to P32, D86 to T90, G413, N476 to A478, and D492.

This sequence belongs to the chaperonin (HSP60) family. Forms a cylinder of 14 subunits composed of two heptameric rings stacked back-to-back. Interacts with the co-chaperonin GroES.

The protein localises to the cytoplasm. The enzyme catalyses ATP + H2O + a folded polypeptide = ADP + phosphate + an unfolded polypeptide.. Functionally, together with its co-chaperonin GroES, plays an essential role in assisting protein folding. The GroEL-GroES system forms a nano-cage that allows encapsulation of the non-native substrate proteins and provides a physical environment optimized to promote and accelerate protein folding. The sequence is that of Chaperonin GroEL from Staphylococcus aureus (strain NCTC 8325 / PS 47).